Reading from the N-terminus, the 111-residue chain is Somatostatin-1B (111 aa).

The N-terminal stretch at 1–19 (MQLLSSLVSLLLVLYSVRA) is a signal peptide. Residues 20 to 87 (AAVLPVEERN…RLEERAVYNR (68 aa)) constitute a propeptide that is removed on maturation. Cys-100 and Cys-111 are joined by a disulfide.

The protein belongs to the somatostatin family.

The protein localises to the secreted. Somatostatin inhibits the release of somatotropin. The chain is Somatostatin-1B (sst1b) from Carassius auratus (Goldfish).